The sequence spans 73 residues: Antimicrobial peptide 143 (73 aa).

The N-terminal stretch at Met-1 to Ala-22 is a signal peptide. Lys-38 carries the post-translational modification Lysine amide. Positions Glu-44–Tyr-73 are excised as a propeptide.

Belongs to the non-disulfide-bridged peptide (NDBP) superfamily. Short antimicrobial peptide (group 4) family. Expressed by the venom gland.

The protein resides in the secreted. It is found in the target cell membrane. Functionally, cationic host defense peptide that have antibacterial activity by breaking membranes. Is more effective on Gram-positive than on Gram-negative bacteria. The polypeptide is Antimicrobial peptide 143 (Lychas mucronatus (Chinese swimming scorpion)).